Here is a 203-residue protein sequence, read N- to C-terminus: Snake venom metalloproteinase adamalysin-2 (203 aa).

A Peptidase M12B domain is found at 7-203 (RYIELVVVAD…YKPQCILNKP (197 aa)). Ca(2+) contacts are provided by E10 and D94. Intrachain disulfides connect C118/C198 and C158/C165. H143 lines the Zn(2+) pocket. E144 is an active-site residue. Zn(2+) is bound by residues H147 and H153. C198 and N201 together coordinate Ca(2+).

It belongs to the venom metalloproteinase (M12B) family. P-I subfamily. In terms of assembly, monomer. Requires Zn(2+) as cofactor. Expressed by the venom gland.

It localises to the secreted. It catalyses the reaction Cleavage of 1-Phe-|-Val-2, 5-His-|-Leu-6, 14-Ala-|-Leu-15, 15-Leu-|-Tyr-16, and 16-Tyr-|-Leu-17 of insulin B chain.. Its function is as follows. Has no significant hemorrhagic activity, but inactivates serpins by limited proteolysis of their reactive-site loops. The chain is Snake venom metalloproteinase adamalysin-2 from Crotalus adamanteus (Eastern diamondback rattlesnake).